An 81-amino-acid chain; its full sequence is MKTLLLTLVVVTIVCLDFGHTRICYNQQSSQPPTTKTCSEGQCYKKTWRDHRGTIIERGCACPNVKPGIQISCCTSDKCNG.

The first 21 residues, 1–21 (MKTLLLTLVVVTIVCLDFGHT), serve as a signal peptide directing secretion. Intrachain disulfides connect Cys24-Cys43, Cys38-Cys60, Cys62-Cys73, and Cys74-Cys79.

The protein belongs to the three-finger toxin family. Short-chain subfamily. Type I alpha-neurotoxin sub-subfamily. In terms of tissue distribution, expressed by the venom gland.

It localises to the secreted. Functionally, binds and inhibits fetal (alpha-1-beta-1-gamma-delta/CHRNA1-CHRNB1-CHRNG-CHRND, IC(50)=1.4 nM), adult (alpha-1-beta-1-delta-epsilon/CHRNA1-CHRNB1-CHRND-CHRNE, IC(50)=12 nM) and neuronal alpha-7/CHRNA7 (IC(50)=400 nM) nicotinic acetylcholine receptors (nAChR) thereby impairing neuromuscular and neuronal transmissions. This chain is Three-finger toxin A1, found in Micrurus laticollaris (Balsas coral snake).